The sequence spans 194 residues: Methyl-CpG-binding domain protein 3-like 1 (194 aa).

Residues M1–S104 form a transcription repressor region.

This sequence belongs to the MBD3L family. In terms of tissue distribution, highly expressed in testis. Detected at low levels in pancreas. Not detected in the other tissues tested.

It localises to the nucleus. Transcriptional repressor. This Homo sapiens (Human) protein is Methyl-CpG-binding domain protein 3-like 1 (MBD3L1).